Reading from the N-terminus, the 547-residue chain is Beta,beta-carotene 15,15'-dioxygenase (547 aa).

Fe cation contacts are provided by His172, His237, His308, and His514. Residues 528–540 (QAASEEQRDRASD) show a composition bias toward basic and acidic residues. The tract at residues 528 to 547 (QAASEEQRDRASDCHGAPLT) is disordered.

This sequence belongs to the carotenoid oxygenase family. The cofactor is Fe(2+). As to expression, highly expressed in retinal pigment epithelium. Also expressed in kidney, testis, liver, brain, small intestine and colon.

The protein localises to the cytoplasm. Its subcellular location is the cytosol. It catalyses the reaction all-trans-beta-carotene + O2 = 2 all-trans-retinal. Its pathway is cofactor metabolism; retinol metabolism. Symmetrically cleaves beta-carotene into two molecules of retinal using a dioxygenase mechanism. The protein is Beta,beta-carotene 15,15'-dioxygenase of Homo sapiens (Human).